The sequence spans 426 residues: Probable auxin efflux carrier component 9 (426 aa).

The Extracellular segment spans residues 1 to 6 (MITGSE). A helical membrane pass occupies residues 7 to 27 (VYQVVEAMAPLYTAAALGYGS). The Cytoplasmic segment spans residues 28–38 (VRWLKAFSNEQ). Residues 39 to 59 (CAGINHFVALYAVPVLIFDMV) form a helical membrane-spanning segment. Valine 51 provides a ligand contact to (indol-3-yl)acetate. The Extracellular portion of the chain corresponds to 60 to 70 (STNNVYKMNGR). Residues 71–91 (LIAADTLQKAVLLLGLMAWAL) form a helical membrane-spanning segment. The Cytoplasmic segment spans residues 92–114 (WERSRARGAGAKAKAAVSSPLQW). A helical membrane pass occupies residues 115–135 (VITCFSVASLPNTIIMGVPLL). (indol-3-yl)acetate is bound by residues asparagine 126 and isoleucine 128. Over 136-145 (NGMYGPVSKD) the chain is Extracellular. A helical transmembrane segment spans residues 146–166 (LMKQIVVMQFCIWYNVIIFLY). Tyrosine 159 lines the (indol-3-yl)acetate pocket. The Cytoplasmic segment spans residues 167 to 286 (EYMAARRSAS…LLQIPNTYAS (120 aa)). The interval 232–258 (RDGVSGETTAAAKEVSSGEVAPVEEEE) is disordered. Residues 287 to 307 (FLGLIWSLIAFKCGFSMPKIV) form a helical membrane-spanning segment. Topologically, residues 308 to 310 (EDS) are extracellular. The helical transmembrane segment at 311 to 331 (LFTIRTTAVGLSMFSSGTFIA) threads the bilayer. The Cytoplasmic segment spans residues 332-347 (RQSRFVPCGYKIASFS). A helical membrane pass occupies residues 348–368 (MVIKFLIGPVVMLFASLVIGM). Residues 369-371 (HGT) lie on the Extracellular side of the membrane. Residues 372–392 (LLHIAVVQAALPLAVTSFVYA) traverse the membrane as a helical segment. Valine 386 serves as a coordination point for (indol-3-yl)acetate. The Cytoplasmic segment spans residues 393 to 405 (EEYKVHADIMSTG). Residues 406-426 (VILGIFISLPVTIVYYILLGL) traverse the membrane as a helical segment.

The protein belongs to the auxin efflux carrier (TC 2.A.69.1) family. As to quaternary structure, homodimer. In terms of tissue distribution, expressed in roots, leaves and shoot apex. Expressed in roots, stem bases, stems, leaves and young panicles.

It is found in the membrane. May act as a component of the auxin efflux carrier. In Oryza sativa subsp. japonica (Rice), this protein is Probable auxin efflux carrier component 9.